We begin with the raw amino-acid sequence, 357 residues long: Vomeronasal type-1 receptor 5 (357 aa).

Over 1–3 (MLK) the chain is Extracellular. A helical membrane pass occupies residues 4 to 24 (LVIIENMAEIMLFSLDLLLFS). Residues 25–52 (TDILCFNFPSKMIKLPGFITIQIFFYPQ) are Cytoplasmic-facing. Residues 53–73 (ASFGISANTILFLFHIFTFVF) form a helical membrane-spanning segment. Topologically, residues 74–81 (SHRSKSID) are extracellular. The helical transmembrane segment at 82–102 (MIISHLSLIHILLLFTQAILV) threads the bilayer. Residues 103-130 (SLDFFGSQNTQDDLRCKVIVFLNKVMRG) lie on the Cytoplasmic side of the membrane. The chain crosses the membrane as a helical span at residues 131–151 (LSICTPCLLNVLQAIISPSIF). The Extracellular portion of the chain corresponds to 152-163 (SLAKLKHPSASH). The helical transmembrane segment at 164–184 (ILGFFLFSWVLNMFIGVIFCC) threads the bilayer. Residues 185-269 (TLWLPPVKWG…PVSPVKRASQ (85 aa)) are Cytoplasmic-facing. Residues 270–290 (TILLLVSFVFIYWVDFMFSFS) traverse the membrane as a helical segment. Topologically, residues 291–300 (RGVTWINDSL) are extracellular. Asn-297 carries an N-linked (GlcNAc...) asparagine glycan. The chain crosses the membrane as a helical span at residues 301 to 321 (LVWFQVIVANSYATISPLMLI). The Cytoplasmic segment spans residues 322–357 (YADNQIFKTLQMLWFKYLSPPKLMLKFNRQCGSTKK).

This sequence belongs to the G-protein coupled receptor 1 family.

Its subcellular location is the cell membrane. Functionally, putative pheromone receptor. The sequence is that of Vomeronasal type-1 receptor 5 (VN1R5) from Gorilla gorilla gorilla (Western lowland gorilla).